The sequence spans 134 residues: UPF0102 protein Dshi_2830 (134 aa).

The protein belongs to the UPF0102 family.

In Dinoroseobacter shibae (strain DSM 16493 / NCIMB 14021 / DFL 12), this protein is UPF0102 protein Dshi_2830.